Reading from the N-terminus, the 545-residue chain is Chaperonin GroEL 1 (545 aa).

Residues 30 to 33 (TLGP), K51, 87 to 91 (DGTTT), G415, and D496 each bind ATP.

It belongs to the chaperonin (HSP60) family. In terms of assembly, forms a cylinder of 14 subunits composed of two heptameric rings stacked back-to-back. Interacts with the co-chaperonin GroES.

The protein localises to the cytoplasm. The enzyme catalyses ATP + H2O + a folded polypeptide = ADP + phosphate + an unfolded polypeptide.. Together with its co-chaperonin GroES, plays an essential role in assisting protein folding. The GroEL-GroES system forms a nano-cage that allows encapsulation of the non-native substrate proteins and provides a physical environment optimized to promote and accelerate protein folding. The sequence is that of Chaperonin GroEL 1 from Nitrobacter hamburgensis (strain DSM 10229 / NCIMB 13809 / X14).